The chain runs to 276 residues: MTLAHIFQTIWDFGTKDSVLQPIWDYVRLNHSETLRSPLFPVVLTVSSYFVLVLPYLSCDILGRKWPAIYRYKIQPDKLPTTAMLLHCSGVTLYNHILLVIPAAVAQWMWRPPIPLPEQAPTLLELVGGVTGNLLLFDLQYFIWHFLHHKIRWLYVTFHAIHHNYSAPFALATQCLGGWELVTVGFWTTLNPVLLRCHLLTTWMFMVVHVYVSVEDHCGYDFPWSTSRLIPFGVYGGPSKHDVHHQKPNTNFAPHFSHWDKMFGTHADFRFSKPRE.

Asn30 carries N-linked (GlcNAc...) asparagine glycosylation. 3 helical membrane-spanning segments follow: residues 39 to 59 (LFPV…YLSC), 90 to 110 (GVTL…QWMW), and 126 to 146 (LVGG…IWHF). In terms of domain architecture, Fatty acid hydroxylase spans 134 to 265 (LLLFDLQYFI…FSHWDKMFGT (132 aa)). The short motif at 144 to 148 (WHFLH) is the Histidine box-1 element. The short motif at 159 to 163 (HAIHH) is the Histidine box-2 element. Asn164 carries N-linked (GlcNAc...) asparagine glycosylation. A run of 2 helical transmembrane segments spans residues 175–195 (CLGG…PVLL) and 199–219 (LLTT…DHCG). The Histidine box-3 signature appears at 240–246 (KHDVHHQ).

It belongs to the sterol desaturase family. Requires Fe cation as cofactor.

It is found in the endoplasmic reticulum membrane. In terms of biological role, may catalyze the formation of 25-hydroxycholesterol from cholesterol. The protein is Cholesterol 25-hydroxylase-like protein 1, member 2 of Danio rerio (Zebrafish).